The sequence spans 513 residues: Coiled-coil domain-containing protein 102B (513 aa).

Residues 1-217 (MNLDSIHRLI…IDSLKLSEEM (217 aa)) form a required for centriolar localization and for interaction with CEP250, CROCC, LRRC45 and NEK2 region. Ser21, Ser22, Ser34, Ser135, Ser142, Ser194, and Ser210 each carry phosphoserine. Residues 72–142 (ELRLRELEEV…ELSTLKKKQS (71 aa)) adopt a coiled-coil conformation. Coiled coils occupy residues 268–337 (QKIL…ESKS) and 363–513 (WDKR…LQNW). Residues Ser401, Ser404, and Ser406 each carry the phosphoserine modification. Positions 493-513 (LDEEKERNENLETELRHLQNW) are disordered.

As to quaternary structure, interacts (via N-terminus) with centriolar protein CEP250/CNAP1; the interaction results in recruitment of CCDC102B to the proximal ends of centrioles. Interacts (via N-terminus) with CROCC/rootletin and LRRC45. Interacts (via N-terminus) with serine/threonine-protein kinase NEK2; the interaction results in phosphorylation of CCDC102B. Post-translationally, phosphorylated directly or indirectly by NEK2 during mitosis which causes dissociation of CCDC102B from the centrosome and allows for centrosome separation.

It localises to the cytoplasm. The protein resides in the cytoskeleton. The protein localises to the microtubule organizing center. Its subcellular location is the centrosome. It is found in the centriole. In terms of biological role, during interphase, forms fibers at the proximal ends of centrioles to maintain centrosome cohesion. During mitosis, dissociates from the centrosome following phosphorylation to allow centrosome separation. Contributes to CROCC/rootletin filament formation. The chain is Coiled-coil domain-containing protein 102B (CCDC102B) from Homo sapiens (Human).